We begin with the raw amino-acid sequence, 191 residues long: Probable rho GDP-dissociation inhibitor (191 aa).

A disordered region spans residues 1 to 22; the sequence is MSDHENTGENTSEYQYKQPPQK. Residues 8 to 21 are compositionally biased toward polar residues; that stretch reads GENTSEYQYKQPPQ.

It belongs to the Rho GDI family.

Its subcellular location is the cytoplasm. In terms of biological role, regulates the GDP/GTP exchange reaction of the Rho proteins by inhibiting the dissociation of GDP from them, and the subsequent binding of GTP to them. This chain is Probable rho GDP-dissociation inhibitor (rhi-1), found in Caenorhabditis elegans.